Consider the following 317-residue polypeptide: Transaldolase (317 aa).

The Schiff-base intermediate with substrate role is filled by Lys-132.

Belongs to the transaldolase family. Type 1 subfamily. Homodimer.

It localises to the cytoplasm. It carries out the reaction D-sedoheptulose 7-phosphate + D-glyceraldehyde 3-phosphate = D-erythrose 4-phosphate + beta-D-fructose 6-phosphate. It participates in carbohydrate degradation; pentose phosphate pathway; D-glyceraldehyde 3-phosphate and beta-D-fructose 6-phosphate from D-ribose 5-phosphate and D-xylulose 5-phosphate (non-oxidative stage): step 2/3. In terms of biological role, transaldolase is important for the balance of metabolites in the pentose-phosphate pathway. The protein is Transaldolase of Haemophilus influenzae (strain PittEE).